The sequence spans 400 residues: Acetate kinase (400 aa).

Asparagine 10 lines the Mg(2+) pocket. Lysine 17 lines the ATP pocket. Arginine 91 contacts substrate. Aspartate 150 (proton donor/acceptor) is an active-site residue. Residues histidine 210–glycine 214, aspartate 285–arginine 287, and glycine 333–asparagine 337 each bind ATP. A Mg(2+)-binding site is contributed by glutamate 387.

Belongs to the acetokinase family. As to quaternary structure, homodimer. The cofactor is Mg(2+). Mn(2+) serves as cofactor.

The protein resides in the cytoplasm. It carries out the reaction acetate + ATP = acetyl phosphate + ADP. The protein operates within metabolic intermediate biosynthesis; acetyl-CoA biosynthesis; acetyl-CoA from acetate: step 1/2. Functionally, catalyzes the formation of acetyl phosphate from acetate and ATP. Can also catalyze the reverse reaction. The polypeptide is Acetate kinase (Baumannia cicadellinicola subsp. Homalodisca coagulata).